Reading from the N-terminus, the 503-residue chain is MLFSQIVATSRDVGATRSRKVKVATLREALTRLEQAEVEPVVAWLSGELRQGRIGIGWRTVADIPATPADVAAVTVSEVDGTISAVAEVSGSGSAARRRELLADLFARTTADERDFLLRLLTGDLRQGALEGVMTDAIAAAADLPIEPVRRAFMLSGRLPATAVAAFDGGVDALTAFRLEVGRPVRPMLASPAESLADAWSELGGDVSVEYKLDGARIQVHRNGDEVRIFTRTLREITGSVPELVALVARLPCTSAVFDGETLALTDSGRPRPFQETMSRFGAESARDLLLHPYFFDCLHLDGVDLLDSPLEERLKALERVAPQHRIPGLIRPDSEGAATHFDDALAAGHEGVMVKSLTAPYAAGRRGRAWQKVKPEHTLDLVVLGAEWGYGRRTGYLSNLHLGARDPDGGAPIMVGKTFKGLTDALLQWQTDEFPRHERARDDHTVYLHPDLVVEIELDGVQVSTRYPGGLALRFARVLRYRPDKTAADADTIDAVRSLLPG.

ATP is bound at residue Glu-210. The N6-AMP-lysine intermediate role is filled by Lys-212. ATP-binding residues include Arg-217, Arg-232, Glu-261, Phe-296, Arg-367, and Lys-373.

This sequence belongs to the ATP-dependent DNA ligase family. Requires Mg(2+) as cofactor.

It catalyses the reaction ATP + (deoxyribonucleotide)n-3'-hydroxyl + 5'-phospho-(deoxyribonucleotide)m = (deoxyribonucleotide)n+m + AMP + diphosphate.. Functionally, DNA ligase that seals nicks in double-stranded DNA during DNA replication, DNA recombination and DNA repair. The sequence is that of Probable DNA ligase from Rhodococcus opacus (strain B4).